The chain runs to 579 residues: MESPIFILITLSFFLQSVLASSQTLSNSSTICKTTPDPKYCKSVFPHSQGNVQQYGCFSIRKSLSQSRKFIRTVDRYIKRNAHLSQPAVIRALQDCRFLAGLTMDYLLTSFETVNDTSAKTSFKPLSFPKADDIQTLLSAALTNEQTCLEGLTTAASYSATWTVRTGVALPLVNDTKLLGVSLALFTKGWVPKKKKRAGFAWAQPRSGSSTHTKPFRLFRNGALPLKMTEKTKAVYESLSRRKLADGDSNGDGDDGSMVLISDIVTVSQDGTGNFTNITAAVAAAPNNTDGSAGFFLIYVTAGIYEEYISIAKNKRYMMMIGDGINQTVVTGNRSVVDGWTTFNSATFAVTAPNFVAVNITFRNTAGPEKHQAVALRSGADFSIFYSCSFEAYQDTLYTHSLRQFYRECDVYGTVDFIFGNAAVVFQNCNLYPRKPMPNQFNAITAQGRSDPNQNTGTSIQNCTIKPADDLVSSNYTVKTYLGRPWKEYSRTVYMQSYIDGFVEPVGWREWNGDFALSTLYYAEYNNTGPGSNTTNRVTWPGYHVINSTDAANFTVTGLFIEADWIWKTGVPYTSGLIS.

The first 20 residues, Met1–Ala20, serve as a signal peptide directing secretion. Residues Ser22–Leu185 form a pectinesterase inhibitor 7 region. Residues Asn27, Asn115, Asn174, Asn274, Asn277, Asn287, Asn326, and Asn333 are each glycosylated (N-linked (GlcNAc...) asparagine). The interval Val265–Asp564 is pectinesterase 7. Position 342 (Thr342) interacts with substrate. Asn359 carries an N-linked (GlcNAc...) asparagine glycan. Gln372 contributes to the substrate binding site. The Proton donor; for pectinesterase activity role is filled by Asp395. Cys409 and Cys429 are disulfide-bonded. Asp416 functions as the Nucleophile; for pectinesterase activity in the catalytic mechanism. 2 N-linked (GlcNAc...) asparagine glycosylation sites follow: Asn462 and Asn475. 2 residues coordinate substrate: Arg484 and Trp486. N-linked (GlcNAc...) asparagine glycosylation is found at Asn526, Asn533, Asn547, and Asn553.

It in the N-terminal section; belongs to the PMEI family. In the C-terminal section; belongs to the pectinesterase family. As to expression, expressed in siliques.

It localises to the secreted. It is found in the cell wall. It catalyses the reaction [(1-&gt;4)-alpha-D-galacturonosyl methyl ester](n) + n H2O = [(1-&gt;4)-alpha-D-galacturonosyl](n) + n methanol + n H(+). It participates in glycan metabolism; pectin degradation; 2-dehydro-3-deoxy-D-gluconate from pectin: step 1/5. Its function is as follows. Acts in the modification of cell walls via demethylesterification of cell wall pectin. In Arabidopsis thaliana (Mouse-ear cress), this protein is Probable pectinesterase/pectinesterase inhibitor 7 (PME7).